The primary structure comprises 369 residues: DNA replication and repair protein RecF (369 aa).

Glycine 30 to threonine 37 serves as a coordination point for ATP.

The protein belongs to the RecF family.

The protein resides in the cytoplasm. The RecF protein is involved in DNA metabolism; it is required for DNA replication and normal SOS inducibility. RecF binds preferentially to single-stranded, linear DNA. It also seems to bind ATP. The protein is DNA replication and repair protein RecF of Pseudomonas aeruginosa (strain UCBPP-PA14).